Consider the following 1531-residue polypeptide: Protein turtle (1531 aa).

Residues 1 to 858 (MGVCADLGSH…PARVKHKAIT (858 aa)) lie on the Extracellular side of the membrane. The segment at 19-44 (QHNTEKSKEQQQQSQPLEIPEQRASK) is disordered. Ig-like C2-type domains follow at residues 132 to 243 (PEDA…KNGT), 253 to 340 (PRFS…ARVI), 344 to 436 (GAVI…AYLS), 440 to 529 (PAKV…GVMD), and 536 to 624 (PAFT…MAVT). 5 disulfide bridges follow: C150-C227, C275-C324, C366-C419, C462-C513, and C558-C611. Fibronectin type-III domains are found at residues 632–728 (QPHA…TLED) and 760–851 (PPRN…VPAR). The chain crosses the membrane as a helical span at residues 859-879 (AGVVGGILFFIVAIILSVCAV). The Cytoplasmic portion of the chain corresponds to 880–1531 (KICNKRKRRK…QAMQQMESVC (652 aa)). Disordered stretches follow at residues 1248-1269 (EETR…VPLQ) and 1318-1395 (NLNL…SYPR). The span at 1333–1349 (SPESRSSSSGFGSKNTS) shows a compositional bias: low complexity. Residues 1380–1389 (QQAQGQTPHG) show a composition bias toward polar residues.

Belongs to the immunoglobulin superfamily. Turtle family. In terms of assembly, interacts with bdl. As to expression, exclusively expressed in the central nervous system.

The protein resides in the membrane. Essential protein that plays a role in the establishment of coordinated motor control. In the developing eye, involved in axonal targeting of the R7 photoreceptor. This is Protein turtle (tutl) from Drosophila melanogaster (Fruit fly).